We begin with the raw amino-acid sequence, 380 residues long: MLRRKPSNASEKEPTQKKKLSLQRSSSFKDFAKSKPSSPVVSEKEFNLDDNIPEDESSVPTPEDAEKSGKKLGKKWRAVISRTMNRKTGKKMVKALSEEMGDTLEEGSASPTSPDCSLDSPGPEKMALAFSEQEERELPALSRQASTGSELCSPSPGSGNLGEESTAPQYTGPFCGRARVHTDFTPSPYDRDSLKLQKGDVIQIVEKPPVGTWLGLLNGRMGSFKFIYVDVLPEEAVGPARPSRRQSKGKRPKPKTLHELLERIGLEEHTSTLLLNGYQTLEDFKELRETHLNELNIMDPQHRAKLLTAAELLLDYDTGSEEAEEGTESGQEPAVSTVADPKVDIPRDSGCFEGSESGRDEAELAGTEEQLHGLSLSGAP.

The segment at 1-174 (MLRRKPSNAS…STAPQYTGPF (174 aa)) is disordered. Residues 22–41 (LQRSSSFKDFAKSKPSSPVV) are compositionally biased toward low complexity. Phosphoserine is present on residues serine 27, serine 34, and serine 42. Position 61 is a phosphothreonine (threonine 61). Basic residues predominate over residues 84 to 93 (MNRKTGKKMV). Phosphoserine is present on serine 97. Phosphothreonine is present on threonine 103. Phosphoserine is present on serine 110. A Phosphothreonine modification is found at threonine 112. 2 positions are modified to phosphoserine: serine 113 and serine 120. The segment covering 143 to 158 (RQASTGSELCSPSPGS) has biased composition (polar residues). The 62-residue stretch at 173-234 (PFCGRARVHT…KFIYVDVLPE (62 aa)) folds into the SH3 domain. The region spanning 252–316 (PKPKTLHELL…LTAAELLLDY (65 aa)) is the SAM domain. Threonine 318 is modified (phosphothreonine). Residues 318–327 (TGSEEAEEGT) show a composition bias toward acidic residues. Residues 318-380 (TGSEEAEEGT…LHGLSLSGAP (63 aa)) form a disordered region. Residue serine 320 is modified to Phosphoserine.

The protein belongs to the SASH family.

In terms of biological role, may function as a signaling adapter protein in lymphocytes. The chain is SAM and SH3 domain-containing protein 3 from Bos taurus (Bovine).